Reading from the N-terminus, the 68-residue chain is MPQLDTSTWFTIIMAMLPTLYLITQLKLLSMNYYQPPLTKNPNLQTHNTCWRPKWTKTYLPHSQPQQS.

Residues 8 to 24 form a helical membrane-spanning segment; sequence TWFTIIMAMLPTLYLIT. N6-acetyllysine; alternate is present on lysine 54. Lysine 54 bears the N6-succinyllysine; alternate mark. Lysine 57 bears the N6-acetyllysine mark.

Belongs to the ATPase protein 8 family. In terms of assembly, component of the ATP synthase complex composed at least of ATP5F1A/subunit alpha, ATP5F1B/subunit beta, ATP5MC1/subunit c (homooctomer), MT-ATP6/subunit a, MT-ATP8/subunit 8, ATP5ME/subunit e, ATP5MF/subunit f, ATP5MG/subunit g, ATP5MK/subunit k, ATP5MJ/subunit j, ATP5F1C/subunit gamma, ATP5F1D/subunit delta, ATP5F1E/subunit epsilon, ATP5PF/subunit F6, ATP5PB/subunit b, ATP5PD/subunit d, ATP5PO/subunit OSCP. ATP synthase complex consists of a soluble F(1) head domain (subunits alpha(3) and beta(3)) - the catalytic core - and a membrane F(0) domain - the membrane proton channel (subunits c, a, 8, e, f, g, k and j). These two domains are linked by a central stalk (subunits gamma, delta, and epsilon) rotating inside the F1 region and a stationary peripheral stalk (subunits F6, b, d, and OSCP). Interacts with PRICKLE3.

The protein resides in the mitochondrion membrane. In terms of biological role, subunit 8, of the mitochondrial membrane ATP synthase complex (F(1)F(0) ATP synthase or Complex V) that produces ATP from ADP in the presence of a proton gradient across the membrane which is generated by electron transport complexes of the respiratory chain. ATP synthase complex consist of a soluble F(1) head domain - the catalytic core - and a membrane F(1) domain - the membrane proton channel. These two domains are linked by a central stalk rotating inside the F(1) region and a stationary peripheral stalk. During catalysis, ATP synthesis in the catalytic domain of F(1) is coupled via a rotary mechanism of the central stalk subunits to proton translocation. In vivo, can only synthesize ATP although its ATP hydrolase activity can be activated artificially in vitro. Part of the complex F(0) domain. The chain is ATP synthase F(0) complex subunit 8 from Papio hamadryas (Hamadryas baboon).